Reading from the N-terminus, the 301-residue chain is Ankyrin repeat domain-containing protein 29 (301 aa).

ANK repeat units follow at residues 11-41 (PLANAAFWAARRGNLALLKLLLNSGRVDVDC), 45-74 (HGTTLLMVAAYAGHIDCVRELVLQGADINL), 78-107 (SGTTALFFAAQQGHNDVVRFLFGFGASTEF), 111-140 (DGGTALLAASQYGHMQVVETLLKHGANIHD), 144-173 (DGATALFLAAQGGYLDVIRLLLASGAKVNQ), 177-206 (DGTAPLWIASQMGHSEVVRVMLLRGADRDA), 210-239 (DGTTALLKAANKGYNDVIKELLKFSPTLGI), and 242-271 (NGTSALHAAVLSGNIKTVALLLEAGADPSL).

The sequence is that of Ankyrin repeat domain-containing protein 29 (ANKRD29) from Homo sapiens (Human).